The chain runs to 616 residues: Electron transfer flavoprotein-ubiquinone oxidoreductase, mitochondrial (616 aa).

Residues 1 to 32 (MLVRLTKLSCPAYHWFHALKIKKCLPLCAPRC) constitute a mitochondrion transit peptide. 70–84 (VVIVGAGPAGLSAAI) serves as a coordination point for FAD. K95 bears the N6-acetyllysine mark. Residues 108–129 (IGAHTLSGACLDPAAFKELFPD) lie within the membrane without spanning it. 2 positions are modified to N6-acetyllysine: K131 and K222. G304 and G305 together coordinate a ubiquinone. An N6-acetyllysine mark is found at K356 and K415. The stretch at 427 to 446 (TGLHVTEYEDNLKQSWVWKE) is an intramembrane region. The residue at position 550 (S550) is a Phosphoserine. 4 residues coordinate [4Fe-4S] cluster: C560, C585, C588, and C591. Positions 576 to 605 (FRLQINAQNCVHCKTCDIKDPSQNINWVVP) constitute a 4Fe-4S ferredoxin-type domain.

This sequence belongs to the ETF-QO/FixC family. In terms of assembly, monomer. Requires [4Fe-4S] cluster as cofactor. FAD serves as cofactor. Acetylation of Lys-95 and Lys-222 is observed in liver mitochondria from fasted mice but not from fed mice.

The protein localises to the mitochondrion inner membrane. It catalyses the reaction a ubiquinone + reduced [electron-transfer flavoprotein] = a ubiquinol + oxidized [electron-transfer flavoprotein] + H(+). Accepts electrons from ETF and reduces ubiquinone. The sequence is that of Electron transfer flavoprotein-ubiquinone oxidoreductase, mitochondrial (Etfdh) from Mus musculus (Mouse).